A 168-amino-acid polypeptide reads, in one-letter code: Phosphopantetheine adenylyltransferase (168 aa).

Threonine 9 provides a ligand contact to substrate. Residues 9-10 and histidine 17 each bind ATP; that span reads TF. 3 residues coordinate substrate: lysine 41, leucine 74, and arginine 88. ATP contacts are provided by residues 89–91, glutamate 99, and 124–130; these read GLR and LQPIASR.

It belongs to the bacterial CoaD family. Homohexamer. The cofactor is Mg(2+).

Its subcellular location is the cytoplasm. The enzyme catalyses (R)-4'-phosphopantetheine + ATP + H(+) = 3'-dephospho-CoA + diphosphate. Its pathway is cofactor biosynthesis; coenzyme A biosynthesis; CoA from (R)-pantothenate: step 4/5. Reversibly transfers an adenylyl group from ATP to 4'-phosphopantetheine, yielding dephospho-CoA (dPCoA) and pyrophosphate. The protein is Phosphopantetheine adenylyltransferase of Sphingopyxis alaskensis (strain DSM 13593 / LMG 18877 / RB2256) (Sphingomonas alaskensis).